A 103-amino-acid chain; its full sequence is N(4)-acetylcytidine amidohydrolase (103 aa).

Residues 6 to 94 (ITFFQRFQDD…IAGIYPDQTQ (89 aa)) form the ASCH domain. Catalysis depends on K21, which acts as the Proton acceptor. T24 serves as the catalytic Nucleophile. The active-site Proton donor is E74.

The protein belongs to the N(4)-acetylcytidine amidohydrolase family.

It catalyses the reaction N(4)-acetylcytidine + H2O = cytidine + acetate + H(+). It carries out the reaction N(4)-acetyl-2'-deoxycytidine + H2O = 2'-deoxycytidine + acetate + H(+). The enzyme catalyses N(4)-acetylcytosine + H2O = cytosine + acetate + H(+). Functionally, catalyzes the hydrolysis of N(4)-acetylcytidine (ac4C). In Citrobacter koseri (strain ATCC BAA-895 / CDC 4225-83 / SGSC4696), this protein is N(4)-acetylcytidine amidohydrolase.